A 525-amino-acid chain; its full sequence is Zwittermicin A synthase ZmaJ (525 aa).

It belongs to the ATP-dependent AMP-binding enzyme family.

The enzyme catalyses holo-[peptidyl-carrier protein] + L-serine + ATP = L-seryl-[peptidyl-carrier protein] + AMP + diphosphate. The protein operates within antibiotic biosynthesis. Its function is as follows. Involved in the biosynthesis of the linear aminopolyol antibiotic zwittermicin A (ZmA). Specifically adenylates L-serine and loads it onto the holo form of ZmaH via a thioester linkage to the phosphopanthetheine moiety. The chain is Zwittermicin A synthase ZmaJ from Bacillus cereus.